A 184-amino-acid polypeptide reads, in one-letter code: Adenine phosphoribosyltransferase (184 aa).

Belongs to the purine/pyrimidine phosphoribosyltransferase family. In terms of assembly, homodimer.

The protein resides in the cytoplasm. It catalyses the reaction AMP + diphosphate = 5-phospho-alpha-D-ribose 1-diphosphate + adenine. The protein operates within purine metabolism; AMP biosynthesis via salvage pathway; AMP from adenine: step 1/1. In terms of biological role, catalyzes a salvage reaction resulting in the formation of AMP, that is energically less costly than de novo synthesis. This chain is Adenine phosphoribosyltransferase, found in Acidovorax sp. (strain JS42).